The sequence spans 462 residues: Putative E3 ubiquitin-protein ligase XBAT35 (462 aa).

3 ANK repeats span residues 6–35 (SKGE…DLEW), 39–69 (EGKT…NVNA), and 75–104 (HAGT…NPLV). Disordered stretches follow at residues 277–341 (HPPV…GKAS) and 356–402 (SSPS…EGER). A compositionally biased stretch (polar residues) spans 304–317 (SLHTTMSDPSNLNH). Positions 319–341 (SIGQASSSSGPSSSTAPPSGKAS) are enriched in low complexity. The segment at 411 to 450 (CAICLDAPSEAVCVPCGHVAGCMSCLKEIKSKNWGCPVCR) adopts an RING-type zinc-finger fold.

It catalyses the reaction S-ubiquitinyl-[E2 ubiquitin-conjugating enzyme]-L-cysteine + [acceptor protein]-L-lysine = [E2 ubiquitin-conjugating enzyme]-L-cysteine + N(6)-ubiquitinyl-[acceptor protein]-L-lysine.. The protein operates within protein modification; protein ubiquitination. In terms of biological role, no E3 ubiquitin-protein ligase activity observed when associated with the E2 enzyme UBC8 in vitro. In Arabidopsis thaliana (Mouse-ear cress), this protein is Putative E3 ubiquitin-protein ligase XBAT35 (XBAT35).